Reading from the N-terminus, the 245-residue chain is MAQAESSTEVVLVDIEGTTTSISFVHDVLFPYAKENAKDYLLETWQTDETKLIVKELQQLPHYTEYAANLATQPTLDAEAISRFVRYLIERDLKVTPLKTLQGLIWAKGYADGQLRGHVYEDVAGAFGKWHQDGIRIAVYSSGSVAAQKLIFQHSIAGDLLPHLSAHFDTHIGHKQQSESYTKIAESLQVQPQHVLFLTDVPQEAAAARAAGMLTTLLERPGNAPLSEEERKKFSSVADFTGIVV.

Residues Asp-14 and Glu-16 each coordinate Mg(2+). Substrate contacts are provided by residues 141–142 (SS) and Lys-175. Residue Asp-200 coordinates Mg(2+).

It belongs to the HAD-like hydrolase superfamily. MasA/MtnC family. Monomer. Requires Mg(2+) as cofactor.

It localises to the cytoplasm. The protein resides in the nucleus. The catalysed reaction is 5-methylsulfanyl-2,3-dioxopentyl phosphate + H2O = 1,2-dihydroxy-5-(methylsulfanyl)pent-1-en-3-one + phosphate. It functions in the pathway amino-acid biosynthesis; L-methionine biosynthesis via salvage pathway; L-methionine from S-methyl-5-thio-alpha-D-ribose 1-phosphate: step 3/6. Its pathway is amino-acid biosynthesis; L-methionine biosynthesis via salvage pathway; L-methionine from S-methyl-5-thio-alpha-D-ribose 1-phosphate: step 4/6. Functionally, bifunctional enzyme that catalyzes the enolization of 2,3-diketo-5-methylthiopentyl-1-phosphate (DK-MTP-1-P) into the intermediate 2-hydroxy-3-keto-5-methylthiopentenyl-1-phosphate (HK-MTPenyl-1-P), which is then dephosphorylated to form the acireductone 1,2-dihydroxy-3-keto-5-methylthiopentene (DHK-MTPene). In Drosophila grimshawi (Hawaiian fruit fly), this protein is Enolase-phosphatase E1.